Reading from the N-terminus, the 223-residue chain is Ubiquitin-conjugating enzyme E2 S (223 aa).

The residue at position 1 (Met-1) is an N-acetylmethionine. One can recognise a UBC core domain in the interval 11-157; the sequence is HIIRLVYKEV…ARLLTEIHGG (147 aa). The active-site Glycyl thioester intermediate is the Cys-95. Residues 155–223 are disordered; sequence HGGAGGPSGG…TDKKRALRRL (69 aa). Over residues 169–195 the composition is skewed to low complexity; that stretch reads GRATASGAAASTADPTAPGGPAGAEGP. Ser-174 bears the Phosphoserine mark. A compositionally biased stretch (basic residues) spans 209–223; that stretch reads AAKKKTDKKRALRRL.

It belongs to the ubiquitin-conjugating enzyme family. In terms of assembly, component of the APC/C complex, composed of at least 14 distinct subunits that assemble into a complex of at least 19 chains with a combined molecular mass of around 1.2 MDa. Within this complex, directly interacts with ANAPC2 and ANAPC4. Interacts with CDC20, FZR1/CDH1 and VHL. Autoubiquitinated by the APC/C complex during G1, leading to its degradation by the proteasome.

The enzyme catalyses S-ubiquitinyl-[E1 ubiquitin-activating enzyme]-L-cysteine + [E2 ubiquitin-conjugating enzyme]-L-cysteine = [E1 ubiquitin-activating enzyme]-L-cysteine + S-ubiquitinyl-[E2 ubiquitin-conjugating enzyme]-L-cysteine.. The protein operates within protein modification; protein ubiquitination. Accepts ubiquitin from the E1 complex and catalyzes its covalent attachment to other proteins. Catalyzes 'Lys-11'-linked polyubiquitination. Acts as an essential factor of the anaphase promoting complex/cyclosome (APC/C), a cell cycle-regulated ubiquitin ligase that controls progression through mitosis. Acts by specifically elongating 'Lys-11'-linked polyubiquitin chains initiated by the E2 enzyme UBE2C/UBCH10 on APC/C substrates, enhancing the degradation of APC/C substrates by the proteasome and promoting mitotic exit. Also acts by elongating ubiquitin chains initiated by the E2 enzyme UBE2D1/UBCH5 in vitro; it is however unclear whether UBE2D1/UBCH5 acts as an E2 enzyme for the APC/C in vivo. Also involved in ubiquitination and subsequent degradation of VHL, resulting in an accumulation of HIF1A. In vitro able to promote polyubiquitination using all 7 ubiquitin Lys residues, except 'Lys-48'-linked polyubiquitination. The protein is Ubiquitin-conjugating enzyme E2 S (UBE2S) of Bos taurus (Bovine).